We begin with the raw amino-acid sequence, 340 residues long: MSLLPHLMRLVEEQHLSAADAEAAMQIVLRGEASHAQIAAFLIALKMKGETVDELVGFARAMRAMAVPVSPNLEGATLLDTCGTGGDGAGTFNISTVAAFVVAAAGVHVAKHGNRSITSKCGSADLLEAWGIPVAMPPEATAFAIREVGIGFLFAPAVHTAMKHAHPVRVDLKLRTVFNLLGPLTNPAGATAQLIGAPSSHAAELMAGAIAALGLERGFVVHGSDGLDEITTTGPTLAFEVRNGKVERRTLEPADFAVAIAAPEDLKGGDLARNLEIADSVLAGAAGPHRDIVLVNAAAALVAAGKADTFLEGMALGVVAIDSGAARAKVKALADFAASR.

5-phospho-alpha-D-ribose 1-diphosphate contacts are provided by residues Gly-83, 86–87 (GD), Thr-91, 93–96 (NIST), 111–119 (KHGNRSITS), and Ser-123. Gly-83 is a binding site for anthranilate. Mg(2+) is bound at residue Ser-95. Asn-114 is a binding site for anthranilate. Position 169 (Arg-169) interacts with anthranilate. Positions 228 and 229 each coordinate Mg(2+).

This sequence belongs to the anthranilate phosphoribosyltransferase family. As to quaternary structure, homodimer. Mg(2+) serves as cofactor.

It carries out the reaction N-(5-phospho-beta-D-ribosyl)anthranilate + diphosphate = 5-phospho-alpha-D-ribose 1-diphosphate + anthranilate. It participates in amino-acid biosynthesis; L-tryptophan biosynthesis; L-tryptophan from chorismate: step 2/5. In terms of biological role, catalyzes the transfer of the phosphoribosyl group of 5-phosphorylribose-1-pyrophosphate (PRPP) to anthranilate to yield N-(5'-phosphoribosyl)-anthranilate (PRA). This chain is Anthranilate phosphoribosyltransferase, found in Solibacter usitatus (strain Ellin6076).